The primary structure comprises 585 residues: Amyloid protein-binding protein 2 (585 aa).

8 TPR repeats span residues 50–83, 120–153, 206–239, 288–321, 333–367, 429–462, 471–505, and 514–547; these read QGRL…HHCF, IQVG…CTLH, AALY…ITAG, SDTL…RQSV, HEDL…ITHI, AKHY…KEQL, ALSV…GKKL, and EYDY…NRLR.

As to quaternary structure, component of a CRL2 E3 ubiquitin-protein ligase complex, also named ECS (Elongin BC-CUL2/5-SOCS-box protein) complex, composed of CUL2, Elongin BC (ELOB and ELOC), RBX1 and substrate-specific adapter APPBP2. Interacts with APP; APP interaction inhibits the E3 ubiquitin-protein ligase activity of the CRL2(APPBP2) complex. Rapidly degraded by the proteasome upon overexpression of a C-terminal fragment of APP.

The protein resides in the nucleus. It is found in the cytoplasm. The protein localises to the cytoskeleton. Its subcellular location is the membrane. It functions in the pathway protein modification; protein ubiquitination. With respect to regulation, E3 ubiquitin-protein ligase activity of the CRL2(APPBP2) complex is inhibited by APP. In terms of biological role, substrate-recognition component of a Cul2-RING (CRL2) E3 ubiquitin-protein ligase complex of the DesCEND (destruction via C-end degrons) pathway, which recognizes a C-degron located at the extreme C terminus of target proteins, leading to their ubiquitination and degradation. The C-degron recognized by the DesCEND pathway is usually a motif of less than ten residues and can be present in full-length proteins, truncated proteins or proteolytically cleaved forms. The CRL2(APPBP2) complex specifically recognizes proteins with a -Arg-Xaa-Xaa-Gly degron at the C-terminus, leading to their ubiquitination and degradation. The CRL2(APPBP2) complex mediates ubiquitination and degradation of truncated SELENOV selenoproteins produced by failed UGA/Sec decoding, which end with a -Arg-Xaa-Xaa-Gly degron. May play a role in intracellular protein transport: may be involved in the translocation of APP along microtubules toward the cell surface. This is Amyloid protein-binding protein 2 from Homo sapiens (Human).